Consider the following 134-residue polypeptide: Transmembrane protein 100 (134 aa).

The next 2 membrane-spanning stretches (helical) occupy residues 56-76 and 84-104; these read CIIPFAVVVFIAGIVVTAVAY and IISIFGLVVLSSGLFLLASSA. Serine 121 is subject to Phosphoserine.

As to quaternary structure, interacts (via C-terminus) with TRPA1 and TRPV1. Interacts with TASOR. In terms of tissue distribution, expressed in neurons of the myenteric and submucosal plexuses in the gastric body, jejunum and proximal colon. Expressed in arterial endothelial cells and neurons of the central nervous system and peripheral nervous system. Expressed in umbilical artery endothelial cells (at protein level).

It localises to the cell membrane. The protein resides in the membrane. Its subcellular location is the perikaryon. The protein localises to the cytoplasm. It is found in the perinuclear region. It localises to the endoplasmic reticulum. In terms of biological role, plays a role during embryonic arterial endothelium differentiation and vascular morphogenesis through the ACVRL1 receptor-dependent signaling pathway upon stimulation by bone morphogenetic proteins, such as GDF2/BMP9 and BMP10. Involved in the regulation of nociception, acting as a modulator of the interaction between TRPA1 and TRPV1, two molecular sensors and mediators of pain signals in dorsal root ganglia (DRG) neurons. Mechanistically, it weakens their interaction, thereby releasing the inhibition of TRPA1 by TRPV1 and increasing the single-channel open probability of the TRPA1-TRPV1 complex. The polypeptide is Transmembrane protein 100 (TMEM100) (Homo sapiens (Human)).